The chain runs to 535 residues: Keratin, type II cytoskeletal 79 (535 aa).

Composition is skewed to polar residues over residues 1–12 and 28–38; these read MRSSVSRQTYST and QARTSFSSVTV. The interval 1-53 is disordered; it reads MRSSVSRQTYSTKGAFSSSSASGGGGSQARTSFSSVTVSRNSGRGGGPRCGPS. The interval 1-141 is head; sequence MRSSVSRQTY…DPEIQRVRTE (141 aa). Gly residues predominate over residues 43–53; it reads GRGGGPRCGPS. Residues 142–177 form a coil 1A region; it reads EREQIKTLNNKFASFIDKVRFLEQQNKVLETKWALL. Residues 142 to 457 enclose the IF rod domain; that stretch reads EREQIKTLNN…KLLESEESRM (316 aa). Positions 178 to 198 are linker 1; that stretch reads QEQGQKSGVTRNNLEPLFEHF. Residues 199–290 form a coil 1B region; the sequence is INNLRGKLDN…HLYEEELSQV (92 aa). The segment at 291-314 is linker 12; that stretch reads QTHVSDTSVILSMDNNRNLDLDSI. The segment at 315-453 is coil 2; the sequence is IAEVKAQYEQ…ATYRKLLESE (139 aa). Positions 454–535 are tail; that stretch reads ESRMSGECPS…TTVKTSSRRY (82 aa).

Belongs to the intermediate filament family. In terms of assembly, heterotetramer of two type I and two type II keratins.

This chain is Keratin, type II cytoskeletal 79 (KRT79), found in Bos taurus (Bovine).